A 520-amino-acid chain; its full sequence is Bifunctional dihydrofolate reductase-thymidylate synthase (520 aa).

The 204-residue stretch at Ala26 to Pro229 folds into the DHFR domain. Residue Val30 coordinates substrate. NADP(+) is bound by residues Ala32 and Gly38–Ser44. Substrate is bound at residue Asp52. NADP(+) is bound by residues Arg81 to Thr83, Leu102 to Lys105, and Gly157 to Asp164. Residues Tyr162 and Thr180 each coordinate substrate. Positions Glu234–Val520 are thymidylate synthase. Arg254 serves as a coordination point for dUMP. Cys400 is a catalytic residue. DUMP contacts are provided by residues His401, Gln421–Asp425, Asn433, and His463–Tyr465.

It in the N-terminal section; belongs to the dihydrofolate reductase family. This sequence in the C-terminal section; belongs to the thymidylate synthase family.

It carries out the reaction (6S)-5,6,7,8-tetrahydrofolate + NADP(+) = 7,8-dihydrofolate + NADPH + H(+). It catalyses the reaction dUMP + (6R)-5,10-methylene-5,6,7,8-tetrahydrofolate = 7,8-dihydrofolate + dTMP. The protein operates within cofactor biosynthesis; tetrahydrofolate biosynthesis; 5,6,7,8-tetrahydrofolate from 7,8-dihydrofolate: step 1/1. In terms of biological role, bifunctional enzyme. Involved in de novo dTMP biosynthesis. Key enzyme in folate metabolism. Catalyzes an essential reaction for de novo glycine and purine synthesis, DNA precursor synthesis, and for the conversion of dUMP to dTMP. This is Bifunctional dihydrofolate reductase-thymidylate synthase from Leishmania amazonensis.